Consider the following 567-residue polypeptide: Proline--tRNA ligase (567 aa).

It belongs to the class-II aminoacyl-tRNA synthetase family. ProS type 1 subfamily. As to quaternary structure, homodimer.

It is found in the cytoplasm. It carries out the reaction tRNA(Pro) + L-proline + ATP = L-prolyl-tRNA(Pro) + AMP + diphosphate. Catalyzes the attachment of proline to tRNA(Pro) in a two-step reaction: proline is first activated by ATP to form Pro-AMP and then transferred to the acceptor end of tRNA(Pro). As ProRS can inadvertently accommodate and process non-cognate amino acids such as alanine and cysteine, to avoid such errors it has two additional distinct editing activities against alanine. One activity is designated as 'pretransfer' editing and involves the tRNA(Pro)-independent hydrolysis of activated Ala-AMP. The other activity is designated 'posttransfer' editing and involves deacylation of mischarged Ala-tRNA(Pro). The misacylated Cys-tRNA(Pro) is not edited by ProRS. The polypeptide is Proline--tRNA ligase (Streptomyces coelicolor (strain ATCC BAA-471 / A3(2) / M145)).